We begin with the raw amino-acid sequence, 196 residues long: Imidazoleglycerol-phosphate dehydratase (196 aa).

The protein belongs to the imidazoleglycerol-phosphate dehydratase family.

It is found in the cytoplasm. The enzyme catalyses D-erythro-1-(imidazol-4-yl)glycerol 3-phosphate = 3-(imidazol-4-yl)-2-oxopropyl phosphate + H2O. Its pathway is amino-acid biosynthesis; L-histidine biosynthesis; L-histidine from 5-phospho-alpha-D-ribose 1-diphosphate: step 6/9. The sequence is that of Imidazoleglycerol-phosphate dehydratase from Chlorobium chlorochromatii (strain CaD3).